The sequence spans 171 residues: Galectin-related protein A (171 aa).

Residues 38-170 (PFCGHIKGGL…INGDLQLTKL (133 aa)) form the Galectin domain.

Does not bind lactose, and may not bind carbohydrates. This is Galectin-related protein A (lgalsl-a) from Xenopus laevis (African clawed frog).